Reading from the N-terminus, the 141-residue chain is Nucleoside diphosphate kinase (141 aa).

Lys-11, Phe-59, Arg-87, Thr-93, Arg-104, and Asn-114 together coordinate ATP. The active-site Pros-phosphohistidine intermediate is the His-117.

It belongs to the NDK family. As to quaternary structure, homotetramer. Mg(2+) is required as a cofactor.

It is found in the cytoplasm. The catalysed reaction is a 2'-deoxyribonucleoside 5'-diphosphate + ATP = a 2'-deoxyribonucleoside 5'-triphosphate + ADP. It carries out the reaction a ribonucleoside 5'-diphosphate + ATP = a ribonucleoside 5'-triphosphate + ADP. Major role in the synthesis of nucleoside triphosphates other than ATP. The ATP gamma phosphate is transferred to the NDP beta phosphate via a ping-pong mechanism, using a phosphorylated active-site intermediate. The protein is Nucleoside diphosphate kinase of Paraburkholderia phytofirmans (strain DSM 17436 / LMG 22146 / PsJN) (Burkholderia phytofirmans).